Reading from the N-terminus, the 639-residue chain is Threonine--tRNA ligase (639 aa).

One can recognise a TGS domain in the interval 1 to 61 (MIHITLPDGS…TQDSPLSIVT (61 aa)). Residues 242–533 (DHRKLGRELD…LIEEHAGALP (292 aa)) are catalytic. C333, H384, and H510 together coordinate Zn(2+).

This sequence belongs to the class-II aminoacyl-tRNA synthetase family. In terms of assembly, homodimer. Requires Zn(2+) as cofactor.

It localises to the cytoplasm. It catalyses the reaction tRNA(Thr) + L-threonine + ATP = L-threonyl-tRNA(Thr) + AMP + diphosphate + H(+). Catalyzes the attachment of threonine to tRNA(Thr) in a two-step reaction: L-threonine is first activated by ATP to form Thr-AMP and then transferred to the acceptor end of tRNA(Thr). Also edits incorrectly charged L-seryl-tRNA(Thr). This is Threonine--tRNA ligase from Acidovorax sp. (strain JS42).